A 551-amino-acid polypeptide reads, in one-letter code: Enhancer of mRNA-decapping protein 3 (551 aa).

Residues 1 to 63 (MSQFVGFGVQ…LKDLKVLTVA (63 aa)) form the Sm domain. Residues 64 to 92 (SQSGKRKQQRQQQQQNDYNQNRGEHIDWQ) form a disordered region. The region spanning 93-129 (DDDVSKIKQQEDFDFQRNLGMFNKKDVFAQLKQNDDI) is the DFDF domain. A phosphoserine mark is found at Ser257 and Ser261. The YjeF N-terminal domain occupies 288 to 527 (VQLLEMESIT…DIGIPQGAYS (240 aa)).

The protein belongs to the EDC3 family. In terms of assembly, homodimer. Interacts with DCP2.

It localises to the cytoplasm. It is found in the P-body. Its function is as follows. Stimulates decapping of both stable and unstable mRNA during mRNA decay. Does not affect nonsense-mediated mRNA decay. Required for normal P-body assembly. The polypeptide is Enhancer of mRNA-decapping protein 3 (EDC3) (Saccharomyces cerevisiae (strain ATCC 204508 / S288c) (Baker's yeast)).